Reading from the N-terminus, the 194-residue chain is FMN-dependent NADH:quinone oxidoreductase (194 aa).

FMN is bound by residues serine 10, 16 to 18 (SQS), 91 to 94 (MYNF), and 135 to 138 (TRGG).

The protein belongs to the azoreductase type 1 family. Homodimer. FMN serves as cofactor.

The catalysed reaction is 2 a quinone + NADH + H(+) = 2 a 1,4-benzosemiquinone + NAD(+). It catalyses the reaction N,N-dimethyl-1,4-phenylenediamine + anthranilate + 2 NAD(+) = 2-(4-dimethylaminophenyl)diazenylbenzoate + 2 NADH + 2 H(+). Functionally, quinone reductase that provides resistance to thiol-specific stress caused by electrophilic quinones. In terms of biological role, also exhibits azoreductase activity. Catalyzes the reductive cleavage of the azo bond in aromatic azo compounds to the corresponding amines. This is FMN-dependent NADH:quinone oxidoreductase from Vibrio parahaemolyticus serotype O3:K6 (strain RIMD 2210633).